The primary structure comprises 145 residues: uncharacterized protein (145 aa).

To R.meliloti R00649.

This is an uncharacterized protein from Agrobacterium fabrum (strain C58 / ATCC 33970) (Agrobacterium tumefaciens (strain C58)).